The chain runs to 246 residues: Hydroxyacylglutathione hydrolase (246 aa).

Residues His58, His60, Asp62, His63, His117, Asp137, and His175 each coordinate Zn(2+).

The protein belongs to the metallo-beta-lactamase superfamily. Glyoxalase II family. Monomer. Zn(2+) is required as a cofactor.

It catalyses the reaction an S-(2-hydroxyacyl)glutathione + H2O = a 2-hydroxy carboxylate + glutathione + H(+). The protein operates within secondary metabolite metabolism; methylglyoxal degradation; (R)-lactate from methylglyoxal: step 2/2. Functionally, thiolesterase that catalyzes the hydrolysis of S-D-lactoyl-glutathione to form glutathione and D-lactic acid. This is Hydroxyacylglutathione hydrolase from Prochlorococcus marinus (strain MIT 9312).